The primary structure comprises 130 residues: DNA-directed RNA polymerase subunit omega (130 aa).

The interval 80–130 (PEPDTVPLIGSAGASVDADDTEVAPERMTEEELLKGLEGLAPPEEQPEEDE) is disordered. Basic and acidic residues predominate over residues 103 to 114 (APERMTEEELLK).

It belongs to the RNA polymerase subunit omega family. In terms of assembly, the RNAP catalytic core consists of 2 alpha, 1 beta, 1 beta' and 1 omega subunit. When a sigma factor is associated with the core the holoenzyme is formed, which can initiate transcription.

The catalysed reaction is RNA(n) + a ribonucleoside 5'-triphosphate = RNA(n+1) + diphosphate. In terms of biological role, promotes RNA polymerase assembly. Latches the N- and C-terminal regions of the beta' subunit thereby facilitating its interaction with the beta and alpha subunits. This Rhodopseudomonas palustris (strain BisB18) protein is DNA-directed RNA polymerase subunit omega.